Here is a 488-residue protein sequence, read N- to C-terminus: UDP-N-acetylmuramate--L-alanine ligase (488 aa).

122 to 128 (GTHGKTT) is a binding site for ATP.

It belongs to the MurCDEF family.

The protein localises to the cytoplasm. It catalyses the reaction UDP-N-acetyl-alpha-D-muramate + L-alanine + ATP = UDP-N-acetyl-alpha-D-muramoyl-L-alanine + ADP + phosphate + H(+). It functions in the pathway cell wall biogenesis; peptidoglycan biosynthesis. Functionally, cell wall formation. The protein is UDP-N-acetylmuramate--L-alanine ligase of Mycobacterium ulcerans (strain Agy99).